We begin with the raw amino-acid sequence, 59 residues long: MNQARIWTVVKPTVGLPLLLGSVTVIAILVHFAVLSHTTWFSKYWNGKAAAIESSVNVG.

The Cytoplasmic portion of the chain corresponds to 1–11; sequence MNQARIWTVVK. Residues 12 to 35 form a helical membrane-spanning segment; it reads PTVGLPLLLGSVTVIAILVHFAVL. An a bacteriochlorophyll-binding site is contributed by H31. Topologically, residues 36 to 59 are periplasmic; sequence SHTTWFSKYWNGKAAAIESSVNVG.

It belongs to the antenna complex alpha subunit family. As to quaternary structure, the core complex is formed by different alpha and beta chains, binding bacteriochlorophyll molecules, and arranged most probably in tetrameric structures disposed around the reaction center. The non-pigmented gamma chains may constitute additional components.

The protein resides in the cell inner membrane. Its function is as follows. Antenna complexes are light-harvesting systems, which transfer the excitation energy to the reaction centers. This chain is Light-harvesting protein B-800-850 alpha chain A (pucAA), found in Rhodopseudomonas palustris (strain ATCC BAA-98 / CGA009).